Consider the following 203-residue polypeptide: Reticulon-like protein B12 (203 aa).

One can recognise a Reticulon domain in the interval V24–S203. The next 3 membrane-spanning stretches (helical) occupy residues N34 to A54, Y55 to W75, and V132 to C152.

The protein localises to the endoplasmic reticulum membrane. In Arabidopsis thaliana (Mouse-ear cress), this protein is Reticulon-like protein B12 (RTNLB12).